Here is a 385-residue protein sequence, read N- to C-terminus: 4-hydroxy-3-methylbut-2-en-1-yl diphosphate synthase (flavodoxin) 2 (385 aa).

[4Fe-4S] cluster is bound by residues Cys-280, Cys-283, Cys-315, and Glu-322.

This sequence belongs to the IspG family. [4Fe-4S] cluster serves as cofactor.

The enzyme catalyses (2E)-4-hydroxy-3-methylbut-2-enyl diphosphate + oxidized [flavodoxin] + H2O + 2 H(+) = 2-C-methyl-D-erythritol 2,4-cyclic diphosphate + reduced [flavodoxin]. The protein operates within isoprenoid biosynthesis; isopentenyl diphosphate biosynthesis via DXP pathway; isopentenyl diphosphate from 1-deoxy-D-xylulose 5-phosphate: step 5/6. Converts 2C-methyl-D-erythritol 2,4-cyclodiphosphate (ME-2,4cPP) into 1-hydroxy-2-methyl-2-(E)-butenyl 4-diphosphate. The protein is 4-hydroxy-3-methylbut-2-en-1-yl diphosphate synthase (flavodoxin) 2 of Streptomyces coelicolor (strain ATCC BAA-471 / A3(2) / M145).